Here is a 228-residue protein sequence, read N- to C-terminus: L-ribulose-5-phosphate 4-epimerase UlaF (228 aa).

Substrate-binding positions include 26-27 (GN), 43-44 (SG), and 72-73 (SS). Residues Asp-74, His-93, and His-95 each contribute to the Zn(2+) site. The Proton donor/acceptor role is filled by Asp-118. Residue His-167 participates in Zn(2+) binding. Tyr-225 serves as the catalytic Proton donor/acceptor.

It belongs to the aldolase class II family. AraD/FucA subfamily. The cofactor is Zn(2+).

The catalysed reaction is L-ribulose 5-phosphate = D-xylulose 5-phosphate. The protein operates within cofactor degradation; L-ascorbate degradation; D-xylulose 5-phosphate from L-ascorbate: step 4/4. Its function is as follows. Catalyzes the isomerization of L-ribulose 5-phosphate to D-xylulose 5-phosphate. Is involved in the anaerobic L-ascorbate utilization. This is L-ribulose-5-phosphate 4-epimerase UlaF from Escherichia fergusonii (strain ATCC 35469 / DSM 13698 / CCUG 18766 / IAM 14443 / JCM 21226 / LMG 7866 / NBRC 102419 / NCTC 12128 / CDC 0568-73).